The primary structure comprises 273 residues: Bidirectional sugar transporter SWEET1a (273 aa).

The Extracellular segment spans residues 1–6 (MEHIAR). Residues 7–27 (FFFGVSGNVIALFLFLSPVVT) form a helical membrane-spanning segment. A MtN3/slv 1 domain is found at 7–95 (FFFGVSGNVI…VIFLIFAERK (89 aa)). Residues 28-42 (FWRIIKKRSTEDFSG) are Cytoplasmic-facing. The helical transmembrane segment at 43–63 (VPYNMTLLNCLLSAWYGLPFV) threads the bilayer. The Extracellular portion of the chain corresponds to 64 to 71 (SPNNILVT). The helical transmembrane segment at 72 to 92 (TINGTGSVIEAIYVVIFLIFA) threads the bilayer. The Cytoplasmic portion of the chain corresponds to 93–101 (ERKARLKMM). Residues 102 to 122 (GLLGLVTSIFTMVVLVSLLAL) form a helical membrane-spanning segment. Over 123–128 (HGQGRK) the chain is Extracellular. A helical membrane pass occupies residues 129–149 (LFCGLAATIFSICMYASPLSI). The region spanning 131–214 (CGLAATIFSI…ILYAIYRNHK (84 aa)) is the MtN3/slv 2 domain. Topologically, residues 150-163 (MRLVIKTKSVEFMP) are cytoplasmic. The helical transmembrane segment at 164–184 (FLLSLSVFLCGTSWFIYGLLG) threads the bilayer. Over 185–188 (RDPF) the chain is Extracellular. The chain crosses the membrane as a helical span at residues 189–209 (IAIPNGCGSFLGLMQLILYAI). Over 210-273 (YRNHKGATPA…SADDKVASQV (64 aa)) the chain is Cytoplasmic.

The protein belongs to the SWEET sugar transporter family. In terms of assembly, forms homooligomers and/or heterooligomers.

The protein localises to the cell membrane. Functionally, mediates both low-affinity uptake and efflux of sugar across the plasma membrane. This is Bidirectional sugar transporter SWEET1a (SWEET1A) from Oryza sativa subsp. japonica (Rice).